The following is a 236-amino-acid chain: Ribose-5-phosphate isomerase A (236 aa).

Substrate-binding positions include 31–34 (TGST), 84–87 (DGAD), and 97–100 (KGGG). The active-site Proton acceptor is the E106. K124 contributes to the substrate binding site.

The protein belongs to the ribose 5-phosphate isomerase family. As to quaternary structure, homodimer.

The catalysed reaction is aldehydo-D-ribose 5-phosphate = D-ribulose 5-phosphate. It participates in carbohydrate degradation; pentose phosphate pathway; D-ribose 5-phosphate from D-ribulose 5-phosphate (non-oxidative stage): step 1/1. Its function is as follows. Catalyzes the reversible conversion of ribose-5-phosphate to ribulose 5-phosphate. This chain is Ribose-5-phosphate isomerase A, found in Polynucleobacter necessarius subsp. necessarius (strain STIR1).